Reading from the N-terminus, the 660-residue chain is Protein FAM161A (660 aa).

Coiled coils occupy residues 93–120 (EEYF…YQDK) and 296–320 (YHDL…ALLA). The segment at 341 to 525 (QLRDFLKYKK…PTVSSRGREQ (185 aa)) is required for interaction with CFAP418. Residues Lys468 and Lys484 each participate in a glycyl lysine isopeptide (Lys-Gly) (interchain with G-Cter in SUMO2) cross-link. Residues 522 to 552 (GREQAVRKSEKERMREYQRELEEREEKLKKR) are a coiled coil. Residues 605 to 660 (KSVTEDKESFNEEEKIEERENGEENYFIDTNSQDSYKEKDEANEESEEEKSVEESH) form a disordered region. Residues 606-623 (SVTEDKESFNEEEKIEER) show a composition bias toward basic and acidic residues. Residues 645–660 (EANEESEEEKSVEESH) show a composition bias toward acidic residues.

Belongs to the FAM161 family. In terms of assembly, interacts (via central region) with CFAP418 (via N-terminus); the interaction is direct. Interacts (via C-terminus) with microtubules. Interacts with LCA5. Interacts with CEP290. Interacts with SDCCAG8. Interacts with FAM161B. Interacts with POC1B. Interacts with CEP78. Forms a microtubule-associated complex with POC5, CETN2 and POC1B. Interacts with CCDC15. In terms of tissue distribution, isoform 1 and isoform 3 are widely expressed with highest levels in retina and testis, with isoform 1 being the most abundant in all tissues tested.

The protein localises to the cytoplasm. It localises to the cytoskeleton. It is found in the cilium basal body. Its subcellular location is the cell projection. The protein resides in the cilium. The protein localises to the microtubule organizing center. It localises to the centrosome. It is found in the centriole. Functionally, involved in ciliogenesis. This is Protein FAM161A (FAM161A) from Homo sapiens (Human).